The sequence spans 89 residues: Small ribosomal subunit protein uS15 (89 aa).

It belongs to the universal ribosomal protein uS15 family. Part of the 30S ribosomal subunit. Forms a bridge to the 50S subunit in the 70S ribosome, contacting the 23S rRNA.

Functionally, one of the primary rRNA binding proteins, it binds directly to 16S rRNA where it helps nucleate assembly of the platform of the 30S subunit by binding and bridging several RNA helices of the 16S rRNA. Its function is as follows. Forms an intersubunit bridge (bridge B4) with the 23S rRNA of the 50S subunit in the ribosome. The polypeptide is Small ribosomal subunit protein uS15 (Azorhizobium caulinodans (strain ATCC 43989 / DSM 5975 / JCM 20966 / LMG 6465 / NBRC 14845 / NCIMB 13405 / ORS 571)).